A 224-amino-acid chain; its full sequence is Glutathione S-transferase U8 (224 aa).

The GST N-terminal domain occupies Glu-5–His-85. Residues Ser-15–Pro-16, Asn-42–Arg-43, Lys-56–Val-57, and Glu-69–Ser-70 contribute to the glutathione site. The 123-residue stretch at Asp-91–Val-213 folds into the GST C-terminal domain. Thr-152 bears the Phosphothreonine mark.

Belongs to the GST superfamily. Tau family.

It is found in the cytoplasm. Its subcellular location is the cytosol. The enzyme catalyses RX + glutathione = an S-substituted glutathione + a halide anion + H(+). In terms of biological role, may be involved in the conjugation of reduced glutathione to a wide number of exogenous and endogenous hydrophobic electrophiles and have a detoxification role against certain herbicides. The chain is Glutathione S-transferase U8 (GSTU8) from Arabidopsis thaliana (Mouse-ear cress).